We begin with the raw amino-acid sequence, 379 residues long: MPADDYPVTELTKALIARPSVTPLDEGCQTLMAERLSAIGFNIEPMVFEDTTNMWARRGNEGPVFCFAGHTDVVPTGDVSRWHTPPFVPTIIDGYLYGRGAADMKGSLAAMVIATERFVAKHPDHNGSIAFLITSDEEGPFINGTTRVIDTLEARNEKITWALVGEPSSTLKLGDVVKNGRRGSLTGNLTVKGIQGHVAYPHLADNPIHKAAPFLAELSQMHWDNGNEFFPPTSFQIANINGGTGASNVIPGALDVMFNFRYSTEVTADILIERVETLLKAHELDYDISWIFNGLPFLTGDGPLLDATRIAIRQVTGYETDPQTTGGTSDGRFIAPTGAKVLELGPVNATIHKVNECVKVDDLEQLALCYEVILEQLLC.

H70 lines the Zn(2+) pocket. D72 is an active-site residue. D103 is a binding site for Zn(2+). The Proton acceptor role is filled by E137. Residues E138, E166, and H352 each contribute to the Zn(2+) site.

It belongs to the peptidase M20A family. DapE subfamily. Homodimer. It depends on Zn(2+) as a cofactor. Requires Co(2+) as cofactor.

It carries out the reaction N-succinyl-(2S,6S)-2,6-diaminopimelate + H2O = (2S,6S)-2,6-diaminopimelate + succinate. It participates in amino-acid biosynthesis; L-lysine biosynthesis via DAP pathway; LL-2,6-diaminopimelate from (S)-tetrahydrodipicolinate (succinylase route): step 3/3. In terms of biological role, catalyzes the hydrolysis of N-succinyl-L,L-diaminopimelic acid (SDAP), forming succinate and LL-2,6-diaminopimelate (DAP), an intermediate involved in the bacterial biosynthesis of lysine and meso-diaminopimelic acid, an essential component of bacterial cell walls. This is Succinyl-diaminopimelate desuccinylase from Shewanella baltica (strain OS223).